The primary structure comprises 273 residues: Inositol monophosphatase 1 (273 aa).

Mg(2+) contacts are provided by E71, D91, V93, and D94. E71 lines the substrate pocket. Substrate contacts are provided by residues 93–96, 194–196, and D221; these read VDGT and GSC. D221 lines the Mg(2+) pocket.

It belongs to the inositol monophosphatase superfamily. It depends on Mg(2+) as a cofactor. In terms of tissue distribution, expressed in seedlings, flowers, young and matures green fruits. Detected in roots and stems.

The catalysed reaction is a myo-inositol phosphate + H2O = myo-inositol + phosphate. Its pathway is polyol metabolism; myo-inositol biosynthesis; myo-inositol from D-glucose 6-phosphate: step 2/2. Responsible for the provision of inositol required for synthesis of phosphatidylinositol and polyphosphoinositides. The protein is Inositol monophosphatase 1 (IMP1) of Solanum lycopersicum (Tomato).